We begin with the raw amino-acid sequence, 210 residues long: Rho-related GTP-binding protein RhoD (210 aa).

24–31 (GDGGCGKT) contacts GTP. The short motif at 46 to 54 (YTPTVFERY) is the Effector region element. Residues 71 to 75 (DTAGQ) and 129 to 132 (CKTD) each bind GTP. Cysteine 207 is subject to Cysteine methyl ester. A lipid anchor (S-geranylgeranyl cysteine) is attached at cysteine 207. The propeptide at 208 to 210 (VVT) is removed in mature form.

It belongs to the small GTPase superfamily. Rho family. In terms of assembly, interacts (in GTP-bound form) with DIAPH2 isoform 3, DAPK3, FILIP1 and WHAMM. Interacts with PAK5. Interacts (independent of GTP-loaded status) with ANKFY1. In terms of tissue distribution, heart, placenta, liver, skeletal muscle, and pancreas and, with weaker intensity, in several other tissues.

It localises to the cell membrane. It is found in the early endosome. Involved in endosome dynamics. May coordinate membrane transport with the function of the cytoskeleton. Involved in the internalization and trafficking of activated tyrosine kinase receptors such as PDGFRB. Participates in the reorganization of actin cytoskeleton; the function seems to involve WHAMM and includes regulation of filopodia formation and actin filament bundling. Can modulate the effect of DAPK3 in reorganization of actin cytoskeleton and focal adhesion dissolution. This chain is Rho-related GTP-binding protein RhoD, found in Homo sapiens (Human).